Consider the following 139-residue polypeptide: Small ribosomal subunit protein uS12 (139 aa).

The tract at residues 1 to 44 is disordered; the sequence is MPTINQLVKKPRTSKVKKSTAPALNKGYNSHKKKATDLASPQKR. Residues 9 to 18 are compositionally biased toward basic residues; the sequence is KKPRTSKVKK. Asp102 bears the 3-methylthioaspartic acid mark.

Belongs to the universal ribosomal protein uS12 family. As to quaternary structure, part of the 30S ribosomal subunit. Contacts proteins S8 and S17. May interact with IF1 in the 30S initiation complex.

With S4 and S5 plays an important role in translational accuracy. In terms of biological role, interacts with and stabilizes bases of the 16S rRNA that are involved in tRNA selection in the A site and with the mRNA backbone. Located at the interface of the 30S and 50S subunits, it traverses the body of the 30S subunit contacting proteins on the other side and probably holding the rRNA structure together. The combined cluster of proteins S8, S12 and S17 appears to hold together the shoulder and platform of the 30S subunit. This chain is Small ribosomal subunit protein uS12, found in Macrococcus caseolyticus (strain JCSC5402) (Macrococcoides caseolyticum).